The chain runs to 350 residues: UDP-3-O-acylglucosamine N-acyltransferase (350 aa).

The Proton acceptor role is filled by histidine 240.

It belongs to the transferase hexapeptide repeat family. LpxD subfamily. As to quaternary structure, homotrimer.

It carries out the reaction a UDP-3-O-[(3R)-3-hydroxyacyl]-alpha-D-glucosamine + a (3R)-hydroxyacyl-[ACP] = a UDP-2-N,3-O-bis[(3R)-3-hydroxyacyl]-alpha-D-glucosamine + holo-[ACP] + H(+). The protein operates within bacterial outer membrane biogenesis; LPS lipid A biosynthesis. In terms of biological role, catalyzes the N-acylation of UDP-3-O-acylglucosamine using 3-hydroxyacyl-ACP as the acyl donor. Is involved in the biosynthesis of lipid A, a phosphorylated glycolipid that anchors the lipopolysaccharide to the outer membrane of the cell. The protein is UDP-3-O-acylglucosamine N-acyltransferase of Methylobacillus flagellatus (strain ATCC 51484 / DSM 6875 / VKM B-1610 / KT).